A 96-amino-acid polypeptide reads, in one-letter code: DNA-directed RNA polymerase subunit Rpo11 (96 aa).

Belongs to the archaeal Rpo11/eukaryotic RPB11/RPC19 RNA polymerase subunit family. As to quaternary structure, part of the RNA polymerase complex.

The protein resides in the cytoplasm. It carries out the reaction RNA(n) + a ribonucleoside 5'-triphosphate = RNA(n+1) + diphosphate. Its function is as follows. DNA-dependent RNA polymerase (RNAP) catalyzes the transcription of DNA into RNA using the four ribonucleoside triphosphates as substrates. This is DNA-directed RNA polymerase subunit Rpo11 from Haloquadratum walsbyi (strain DSM 16790 / HBSQ001).